Consider the following 119-residue polypeptide: MANTKRELFLKRRLRVRNKLKASANGRLRLSVHRSSKNISAQLIDDANGVTLAAASTLEKGLGFVGKNNVEASAAVGRAIAERAKAAGIEECFFDRGGFLFHGKIKALADAAREGGLKF.

This sequence belongs to the universal ribosomal protein uL18 family. Part of the 50S ribosomal subunit; part of the 5S rRNA/L5/L18/L25 subcomplex. Contacts the 5S and 23S rRNAs.

This is one of the proteins that bind and probably mediate the attachment of the 5S RNA into the large ribosomal subunit, where it forms part of the central protuberance. This is Large ribosomal subunit protein uL18 from Cereibacter sphaeroides (strain ATCC 17029 / ATH 2.4.9) (Rhodobacter sphaeroides).